A 171-amino-acid polypeptide reads, in one-letter code: Fetal and adult testis-expressed transcript protein homolog (171 aa).

Disordered stretches follow at residues 1-27 (MAGG…QEPS) and 68-92 (ANKS…QEGG). The chain crosses the membrane as a helical span at residues 151–169 (TLFFTMLVSVCVANLWLWL).

In terms of assembly, interacts with BIK and RNF183. Interacts with IMMT/MIC60and EMD.

Its subcellular location is the mitochondrion. The protein localises to the mitochondrion outer membrane. It is found in the endoplasmic reticulum membrane. Functionally, involved in the regulation of endoplasmic reticulum (ER)-mitochondria coupling. Negatively regulates the ER-mitochondria distance and Ca(2+) transfer from ER to mitochondria possibly implicating it in the regulation of apoptosis. May collaborate with RNF183 to restrain BIK protein levels thus regulating apoptotic signaling. This chain is Fetal and adult testis-expressed transcript protein homolog (FATE1), found in Sus scrofa (Pig).